The primary structure comprises 915 residues: Probable LRR receptor-like serine/threonine-protein kinase At2g16250 (915 aa).

The signal sequence occupies residues 1-28; that stretch reads MVDQRRSALGFVLLLLCLVLFFDCVVVG. The Extracellular portion of the chain corresponds to 29-451; it reads QTQSRFSEKL…ISRRTVIILA (423 aa). Residues asparagine 71, asparagine 78, asparagine 101, asparagine 109, asparagine 150, asparagine 158, and asparagine 177 are each glycosylated (N-linked (GlcNAc...) asparagine). 11 LRR repeats span residues 102–125, 127–150, 151–174, 176–198, 199–223, 225–247, 248–271, 272–295, 297–320, 321–344, and 366–390; these read LTRLSYFNASGLALPGTIPEWFGV, LLALEVLDLSSCSVNGVVPFTLGN, LTSLRTLNLSQNSLTSLVPSSLGQ, LNLSQLDLSRNSFTGVLPQSFSS, LKNLLTLDVSSNYLTGPIPPGLGAL, KLIHLNFSSNSFSSPIPSELGDL, VNLVDFDLSINSLSGSVPQELRKL, SKLQLMAIGDNLLSGTLPVDLFSA, SQLQTLVLRENGFSGSLPDVCWSL, PKLRILDIAKNNFTGLLPYSSYDS, and LRRFRIMDLSGNYFEGKLPDYVTGE. Asparagine 230 carries an N-linked (GlcNAc...) asparagine glycan. The N-linked (GlcNAc...) asparagine glycan is linked to asparagine 332. 3 N-linked (GlcNAc...) asparagine glycosylation sites follow: asparagine 391, asparagine 429, and asparagine 437. Residues 452–472 traverse the membrane as a helical segment; the sequence is AVGGGVAFILLFVILPIILVL. Topologically, residues 473-915 are cytoplasmic; sequence CMRHRRRAAQ…AAYGVVEDNL (443 aa). The disordered stretch occupies residues 482 to 503; sequence QRGNNDRPKPAGEASQQPPKGA. A Protein kinase domain is found at 527-811; the sequence is FNDANLIKRG…IVNALENPLK (285 aa). ATP contacts are provided by residues 533–541 and lysine 555; that span reads IKRGHSGNL. Aspartate 657 acts as the Proton acceptor in catalysis. The interval 851 to 915 is disordered; the sequence is TAVQAGATTS…AAYGVVEDNL (65 aa). Gly residues predominate over residues 859–870; that stretch reads TSGGGGGGGGNG. Residues 871–892 are compositionally biased toward low complexity; the sequence is LRNSGSQGSSGRNNNNNGNSSS.

The protein belongs to the protein kinase superfamily. Ser/Thr protein kinase family.

The protein localises to the membrane. The catalysed reaction is L-seryl-[protein] + ATP = O-phospho-L-seryl-[protein] + ADP + H(+). It catalyses the reaction L-threonyl-[protein] + ATP = O-phospho-L-threonyl-[protein] + ADP + H(+). In Arabidopsis thaliana (Mouse-ear cress), this protein is Probable LRR receptor-like serine/threonine-protein kinase At2g16250.